A 534-amino-acid chain; its full sequence is Cytochrome P450 714B1 (534 aa).

Position 1 (Met1) is a topological domain, lumenal. The helical; Signal-anchor for type III membrane protein transmembrane segment at 2–22 threads the bilayer; the sequence is VVVVAAAMAAASLCCGVAAYL. Residues 23–534 are Cytoplasmic-facing; that stretch reads YYVLWLAPER…RSKCDWAGFD (512 aa). Heme is bound at residue Cys472.

The protein belongs to the cytochrome P450 family. Requires heme as cofactor. Highly expressed in spikelet and uppermost internode. Detected in shoots, roots, leaves and anthers.

The protein resides in the membrane. Its function is as follows. Catalyzes the 13-hydroxylation of gibberellins (GAs). Determines the ratio of GA4 and GA1. Converts GA12 into GA53. This is Cytochrome P450 714B1 (CYP714B1) from Oryza sativa subsp. japonica (Rice).